The sequence spans 147 residues: Large ribosomal subunit protein uL15 (147 aa).

The disordered stretch occupies residues 1–57 (MRLHDVKPQKGSKKRKKRVARGISAGQGASAGLGMRGQKSRSGSGTRPGFEGGQQPL). The span at 10–20 (KGSKKRKKRVA) shows a compositional bias: basic residues.

It belongs to the universal ribosomal protein uL15 family. Part of the 50S ribosomal subunit.

Binds to the 23S rRNA. In Nostoc punctiforme (strain ATCC 29133 / PCC 73102), this protein is Large ribosomal subunit protein uL15.